The primary structure comprises 937 residues: Inactive tyrosine-protein kinase transmembrane receptor ROR1 (937 aa).

Positions Met-1–Ala-29 are cleaved as a signal peptide. Residues Gln-30 to Tyr-406 lie on the Extracellular side of the membrane. Residues Pro-42–Ser-141 enclose the Ig-like C2-type domain. Asn-47 and Asn-66 each carry an N-linked (GlcNAc...) asparagine glycan. Intrachain disulfides connect Cys-79-Cys-131, Cys-170-Cys-235, Cys-178-Cys-228, Cys-219-Cys-260, Cys-248-Cys-296, Cys-252-Cys-282, Cys-313-Cys-391, Cys-334-Cys-374, and Cys-362-Cys-386. Positions Glu-165–Ile-299 constitute an FZ domain. Residue Asn-184 is glycosylated (N-linked (GlcNAc...) asparagine). In terms of domain architecture, Kringle spans Lys-312 to Cys-391. N-linked (GlcNAc...) asparagine glycosylation is present at Asn-315. The chain crosses the membrane as a helical span at residues Ile-407–Val-427. The Cytoplasmic segment spans residues Cys-428–Val-937. The 274-residue stretch at Val-473–Leu-746 folds into the Protein kinase domain. Residues Leu-479–Ile-487 and Lys-506 contribute to the ATP site. At Tyr-645 the chain carries Phosphotyrosine; by autocatalysis. A compositionally biased stretch (low complexity) spans Ser-753–Ser-762. Disordered regions lie at residues Ser-753–Val-778, Gly-840–Ile-890, and Gln-916–Val-937. The segment covering Gly-763–Val-778 has biased composition (polar residues). Over residues Arg-854 to Ser-864 the composition is skewed to low complexity. Residues Thr-865 to Ala-880 show a composition bias toward polar residues.

Belongs to the protein kinase superfamily. Tyr protein kinase family. ROR subfamily. Interacts with ERBB2 and IGFBP5. As to expression, at postnatal P0, expressed in heart, lung, liver, kidney, spleen and inner ear.

It is found in the membrane. Its subcellular location is the cell projection. The protein localises to the axon. In terms of biological role, has very low kinase activity in vitro and is unlikely to function as a tyrosine kinase in vivo. Receptor for ligand WNT5A which activate downstream NFkB signaling pathway and may result in the inhibition of WNT3A-mediated signaling. In inner ear, crucial for spiral ganglion neurons to innervate auditory hair cells. Via IGFBP5 ligand, forms a complex with ERBB2 to enhance CREB oncogenic signaling. This Mus musculus (Mouse) protein is Inactive tyrosine-protein kinase transmembrane receptor ROR1 (Ror1).